The chain runs to 226 residues: Leucyl/phenylalanyl-tRNA--protein transferase (226 aa).

This sequence belongs to the L/F-transferase family.

The protein resides in the cytoplasm. The enzyme catalyses N-terminal L-lysyl-[protein] + L-leucyl-tRNA(Leu) = N-terminal L-leucyl-L-lysyl-[protein] + tRNA(Leu) + H(+). The catalysed reaction is N-terminal L-arginyl-[protein] + L-leucyl-tRNA(Leu) = N-terminal L-leucyl-L-arginyl-[protein] + tRNA(Leu) + H(+). It catalyses the reaction L-phenylalanyl-tRNA(Phe) + an N-terminal L-alpha-aminoacyl-[protein] = an N-terminal L-phenylalanyl-L-alpha-aminoacyl-[protein] + tRNA(Phe). Functionally, functions in the N-end rule pathway of protein degradation where it conjugates Leu, Phe and, less efficiently, Met from aminoacyl-tRNAs to the N-termini of proteins containing an N-terminal arginine or lysine. The chain is Leucyl/phenylalanyl-tRNA--protein transferase from Pseudomonas aeruginosa (strain ATCC 15692 / DSM 22644 / CIP 104116 / JCM 14847 / LMG 12228 / 1C / PRS 101 / PAO1).